The chain runs to 64 residues: Prokaryotic ubiquitin-like protein UBact (64 aa).

Residues 1-64 (MFNGEEVILF…SERYRQRTGE (64 aa)) form a disordered region. Residues 22–64 (REIHKDAPAPKRPETKKTGDRLMDRMKKVDPNQSERYRQRTGE) show a composition bias toward basic and acidic residues. Glu-64 is covalently cross-linked (Isoglutamyl lysine isopeptide (Glu-Lys) (interchain with K-? in acceptor proteins)).

This sequence belongs to the ubiquitin-like protein UBact family.

Its function is as follows. May function as a protein modifier covalently attached to lysine residues of substrate proteins. This may serve to target the modified proteins for degradation by proteasomes. The polypeptide is Prokaryotic ubiquitin-like protein UBact (Leptospirillum ferriphilum (strain ML-04)).